A 204-amino-acid chain; its full sequence is Holliday junction branch migration complex subunit RuvA (204 aa).

The tract at residues 1–67 is domain I; the sequence is MIAFLSGHLV…ETELVLYGFG (67 aa). The tract at residues 68 to 146 is domain II; the sequence is SPAERDVFVE…HWRQGLENAD (79 aa). A flexible linker region spans residues 147 to 156; the sequence is RPLAGGPPPA. The domain III stretch occupies residues 156 to 204; the sequence is AIREEVEMALLALGYSLQEIQAALQALPSQPRPTEEWLRDAITYLSRQP.

The protein belongs to the RuvA family. In terms of assembly, homotetramer. Forms an RuvA(8)-RuvB(12)-Holliday junction (HJ) complex. HJ DNA is sandwiched between 2 RuvA tetramers; dsDNA enters through RuvA and exits via RuvB. An RuvB hexamer assembles on each DNA strand where it exits the tetramer. Each RuvB hexamer is contacted by two RuvA subunits (via domain III) on 2 adjacent RuvB subunits; this complex drives branch migration. In the full resolvosome a probable DNA-RuvA(4)-RuvB(12)-RuvC(2) complex forms which resolves the HJ.

The protein localises to the cytoplasm. In terms of biological role, the RuvA-RuvB-RuvC complex processes Holliday junction (HJ) DNA during genetic recombination and DNA repair, while the RuvA-RuvB complex plays an important role in the rescue of blocked DNA replication forks via replication fork reversal (RFR). RuvA specifically binds to HJ cruciform DNA, conferring on it an open structure. The RuvB hexamer acts as an ATP-dependent pump, pulling dsDNA into and through the RuvAB complex. HJ branch migration allows RuvC to scan DNA until it finds its consensus sequence, where it cleaves and resolves the cruciform DNA. This chain is Holliday junction branch migration complex subunit RuvA, found in Synechococcus sp. (strain JA-3-3Ab) (Cyanobacteria bacterium Yellowstone A-Prime).